We begin with the raw amino-acid sequence, 1121 residues long: Potassium channel subfamily U member 1 (1121 aa).

The Extracellular portion of the chain corresponds to 1-24 (MSQTLLDSLNQKELTETSCTIEIQ). A helical membrane pass occupies residues 25–45 (AAFILSSLATFFGGLIILFLF). Topologically, residues 46 to 101 (RIALKSSRSWKYVKGPRGLLELFSSRRIEANPLRKLYFHGVFRQRIEMLLSAQTVV) are cytoplasmic. Residues 102 to 122 (GQVLVILVFVLSIGSLVIYFI) traverse the membrane as a helical segment. Residues 123 to 137 (NSMDPVRRCSSYEDK) are Extracellular-facing. A helical transmembrane segment spans residues 138-158 (IVHVDLSFNAFFSFYFGLRFW). At 159-165 (AAEDKIK) the chain is on the cytoplasmic side. Residues 166 to 186 (FWLEMNSIVDIFTIPPTFISY) form a helical membrane-spanning segment. At 187-188 (YL) the chain is on the extracellular side. A helical; Voltage-sensor membrane pass occupies residues 189 to 209 (KSNWLGLRFLRALRLLELPKI). Residues 210–226 (LQILQVIKTSNSVKLSK) are Cytoplasmic-facing. Residues 227–247 (LLSIVISTWFTAAGFLHLVEN) traverse the membrane as a helical segment. Residues 248–259 (SGDPWLNGRNSQ) lie on the Extracellular side of the membrane. Positions 260–282 (TMSYFESIYLVTATMSTVGFGDV) form an intramembrane region, pore-forming. The short motif at 276 to 279 (TVGF) is the Selectivity for potassium element. The Extracellular segment spans residues 283–290 (VAKTSLGR). The chain crosses the membrane as a helical span at residues 291–311 (IFIVFFTLGSLILFANYIPEM). Residues 312–1121 (VELFSTRKKY…LDASDIVQEK (810 aa)) lie on the Cytoplasmic side of the membrane. RCK N-terminal domains lie at 331-473 (KKFI…DNIL) and 718-889 (QNHI…DGML). Disordered regions lie at residues 836-858 (SPTP…KERK) and 1052-1076 (DSSP…GSNF).

Belongs to the potassium channel family. Calcium-activated (TC 1.A.1.3) subfamily. KCa5.1/KCNU1 sub-subfamily. Homotetramer; which constitutes the calcium-activated potassium channel. Interact with LRRC52; this interaction changes some channel gating properties, such as shifting gating to more negative potentials at a given pH. Testis-specific. Mainly expressed in spermatocytes. In terms of tissue distribution, expressed in testis, brain, eye and kidney.

Its subcellular location is the cell membrane. It localises to the cytoplasm. The catalysed reaction is K(+)(in) = K(+)(out). With respect to regulation, regulated by changes in cytosolic pH; activated by alkalization. In contrast to human KCNU1 is not activated by Ca(2+) or Mg(2+). The auxiliary subunit LRRC52 shifts the activation of KCNU1 to more negative potentials at a given pH. Its function is as follows. Testis-specific potassium channel activated by both intracellular pH and membrane voltage that mediates export of K(+). Represents the primary spermatozoan K(+) current. The channel underlies a pH-triggered membrane hyperpolarization during the process of sperm capacitation, as sperm encounter the alkaline environment near the ovum in the female reproductive tract, thereby playing an essential for male fertility. The chain is Potassium channel subfamily U member 1 (Kcnu1) from Mus musculus (Mouse).